Consider the following 92-residue polypeptide: Small ribosomal subunit protein uS19 (92 aa).

Belongs to the universal ribosomal protein uS19 family.

Its function is as follows. Protein S19 forms a complex with S13 that binds strongly to the 16S ribosomal RNA. The protein is Small ribosomal subunit protein uS19 of Streptococcus thermophilus (strain ATCC BAA-491 / LMD-9).